The primary structure comprises 193 residues: Phosphoheptose isomerase (193 aa).

The SIS domain maps to 37–193 (LADSFKAGGK…MLIEKEMAKG (157 aa)). Position 52-54 (52-54 (NGG)) interacts with substrate. His-61 and Glu-65 together coordinate Zn(2+). Residues Glu-65, 93-94 (ND), 119-121 (STS), Ser-124, and Gln-172 each bind substrate. Gln-172 and His-180 together coordinate Zn(2+).

It belongs to the SIS family. GmhA subfamily. In terms of assembly, homotetramer. The cofactor is Zn(2+).

It localises to the cytoplasm. It catalyses the reaction 2 D-sedoheptulose 7-phosphate = D-glycero-alpha-D-manno-heptose 7-phosphate + D-glycero-beta-D-manno-heptose 7-phosphate. The protein operates within carbohydrate biosynthesis; D-glycero-D-manno-heptose 7-phosphate biosynthesis; D-glycero-alpha-D-manno-heptose 7-phosphate and D-glycero-beta-D-manno-heptose 7-phosphate from sedoheptulose 7-phosphate: step 1/1. In terms of biological role, catalyzes the isomerization of sedoheptulose 7-phosphate in D-glycero-D-manno-heptose 7-phosphate. The sequence is that of Phosphoheptose isomerase from Klebsiella pneumoniae subsp. pneumoniae (strain ATCC 700721 / MGH 78578).